Reading from the N-terminus, the 240-residue chain is Small ribosomal subunit protein uS2 (240 aa).

It belongs to the universal ribosomal protein uS2 family. As to quaternary structure, component of the small ribosomal subunit. Mature ribosomes consist of a small (40S) and a large (60S) subunit. The 40S subunit contains about 33 different proteins and 1 molecule of RNA (18S). The 60S subunit contains about 49 different proteins and 3 molecules of RNA (25S, 5.8S and 5S). Interacts with RPS21.

It is found in the cytoplasm. Functionally, required for the assembly and/or stability of the 40S ribosomal subunit. Required for the processing of the 20S rRNA-precursor to mature 18S rRNA in a late step of the maturation of 40S ribosomal subunits. This Enterocytozoon bieneusi (strain H348) (Microsporidian parasite) protein is Small ribosomal subunit protein uS2.